The primary structure comprises 422 residues: GPI mannosyltransferase 1 (422 aa).

The next 8 membrane-spanning stretches (helical) occupy residues 10–30 (TTPLFTISLLLRLGLLFYGIY), 82–102 (FPAFGKLVFAAADLLAGWLIL), 162–182 (IILGLSVHFKIYPFIYAPAIV), 216–236 (LKFGLLSLITFMILNLVMFAI), 282–302 (IESFAFLPQLLLSCVLIPLAL), 327–347 (SQYFLWYMIFLPLYLPNSSFL), 352–372 (LGIFALLLWIVSQAAWLQQGY), and 385–405 (GLWLASIAFFLVNCWILGVII).

This sequence belongs to the PIGM family.

The protein localises to the endoplasmic reticulum membrane. It participates in glycolipid biosynthesis; glycosylphosphatidylinositol-anchor biosynthesis. In terms of biological role, mannosyltransferase involved in glycosylphosphatidylinositol-anchor biosynthesis. Transfers the first alpha-1,4-mannose to GlcN-acyl-PI during GPI precursor assembly. Required for cell wall integrity. The protein is GPI mannosyltransferase 1 (GPI14) of Gibberella zeae (strain ATCC MYA-4620 / CBS 123657 / FGSC 9075 / NRRL 31084 / PH-1) (Wheat head blight fungus).